The following is a 54-amino-acid chain: uncharacterized protein (54 aa).

The first 23 residues, 1–23, serve as a signal peptide directing secretion; that stretch reads MKELIFFLLIIVILFVVFMVVSS.

This is an uncharacterized protein from Acheta domesticus (House cricket).